The following is a 397-amino-acid chain: UPF0261 protein mlr3387 (397 aa).

It belongs to the UPF0261 family.

The chain is UPF0261 protein mlr3387 from Mesorhizobium japonicum (strain LMG 29417 / CECT 9101 / MAFF 303099) (Mesorhizobium loti (strain MAFF 303099)).